Reading from the N-terminus, the 177-residue chain is Large ribosomal subunit protein uL10 (177 aa).

The protein belongs to the universal ribosomal protein uL10 family. In terms of assembly, part of the ribosomal stalk of the 50S ribosomal subunit. The N-terminus interacts with L11 and the large rRNA to form the base of the stalk. The C-terminus forms an elongated spine to which L12 dimers bind in a sequential fashion forming a multimeric L10(L12)X complex.

Functionally, forms part of the ribosomal stalk, playing a central role in the interaction of the ribosome with GTP-bound translation factors. This Legionella pneumophila (strain Corby) protein is Large ribosomal subunit protein uL10.